A 152-amino-acid chain; its full sequence is MKLILTADVDHLGSVGDTVEVKDGYGRNFLLPHGLAIVASRGAQRQADEIRRARETKAMRDREHANEIKVAIEALGSVSLPMKTVADSGKLFGSVTAGDVVAAIKKAGGPNLDKRIVRLPKTHIKAVGTHPVSVHLHPEVDVVVLLDVVAAR.

The protein belongs to the bacterial ribosomal protein bL9 family.

Its function is as follows. Binds to the 23S rRNA. This chain is Large ribosomal subunit protein bL9, found in Mycobacterium leprae (strain Br4923).